The sequence spans 394 residues: Olfactomedin-like protein 3B (394 aa).

Residues 1 to 18 form the signal peptide; that stretch reads MKATIFFLLLTVLAHSRS. Residues 29-94 adopt a coiled-coil conformation; that stretch reads LENRMLAMEE…RVDRVEREMD (66 aa). One can recognise an Olfactomedin-like domain in the interval 132-383; it reads VCVNIISSLK…QILYKLELKK (252 aa). A disulfide bridge connects residues Cys133 and Cys310. N-linked (GlcNAc...) asparagine glycans are attached at residues Asn169, Asn204, and Asn233.

This sequence belongs to the OLFML3 family.

The protein resides in the secreted. Functionally, secreted scaffold protein that plays an essential role in dorsoventral patterning during early development. Stabilizes axial formation by restricting chordin (CHRD) activity on the dorsal side. Acts by facilitating the association between the tolloid proteases and their substrate chordin (CHRD), leading to enhance chordin (CHRD) degradation. In Danio rerio (Zebrafish), this protein is Olfactomedin-like protein 3B (olfml3b).